Consider the following 239-residue polypeptide: Probable transcriptional regulatory protein BCQ_0605 (239 aa).

It belongs to the TACO1 family. YeeN subfamily.

The protein resides in the cytoplasm. This Bacillus cereus (strain Q1) protein is Probable transcriptional regulatory protein BCQ_0605.